A 496-amino-acid chain; its full sequence is Probable cytosol aminopeptidase (496 aa).

Mn(2+) contacts are provided by lysine 251 and aspartate 256. Residue lysine 263 is part of the active site. Mn(2+) is bound by residues aspartate 274, aspartate 333, and glutamate 335. Arginine 337 is an active-site residue.

It belongs to the peptidase M17 family. Mn(2+) is required as a cofactor.

It is found in the cytoplasm. The enzyme catalyses Release of an N-terminal amino acid, Xaa-|-Yaa-, in which Xaa is preferably Leu, but may be other amino acids including Pro although not Arg or Lys, and Yaa may be Pro. Amino acid amides and methyl esters are also readily hydrolyzed, but rates on arylamides are exceedingly low.. It carries out the reaction Release of an N-terminal amino acid, preferentially leucine, but not glutamic or aspartic acids.. Its function is as follows. Presumably involved in the processing and regular turnover of intracellular proteins. Catalyzes the removal of unsubstituted N-terminal amino acids from various peptides. The polypeptide is Probable cytosol aminopeptidase (Acidovorax sp. (strain JS42)).